Consider the following 502-residue polypeptide: Probable cytosol aminopeptidase (502 aa).

Residues Lys-269 and Asp-274 each contribute to the Mn(2+) site. Residue Lys-281 is part of the active site. Asp-292, Asp-351, and Glu-353 together coordinate Mn(2+). The active site involves Arg-355.

This sequence belongs to the peptidase M17 family. Mn(2+) serves as cofactor.

The protein resides in the cytoplasm. The enzyme catalyses Release of an N-terminal amino acid, Xaa-|-Yaa-, in which Xaa is preferably Leu, but may be other amino acids including Pro although not Arg or Lys, and Yaa may be Pro. Amino acid amides and methyl esters are also readily hydrolyzed, but rates on arylamides are exceedingly low.. It catalyses the reaction Release of an N-terminal amino acid, preferentially leucine, but not glutamic or aspartic acids.. Functionally, presumably involved in the processing and regular turnover of intracellular proteins. Catalyzes the removal of unsubstituted N-terminal amino acids from various peptides. This chain is Probable cytosol aminopeptidase, found in Shewanella loihica (strain ATCC BAA-1088 / PV-4).